Reading from the N-terminus, the 291-residue chain is MELIIATRKSKLAQVQTEKVMELLKGKENVDSKKLLVMTEGDRRLDVSLNKIGGKGLFVKEIELALLNKEAHGAVHSMKDVPFELPSEFELVAMPEREDIRDAFVSLNGSTLSNLRKGARIGTSSIRRAEQLKLFRDDLEIVPIRGNVQTRIKKITEENLDGIILAAAGLKRLGMEDVISDYFDPKVFLPAIGQGALGIECLKGGEFNDYFKALDSKEVRTTVEAERSFMKVLNGGCHSLIGAYSEVKDNDLYMIGTFTVNNRIVKKDILGNKEDNILLGKKLAEKILEEV.

At C237 the chain carries S-(dipyrrolylmethanemethyl)cysteine.

Belongs to the HMBS family. As to quaternary structure, monomer. It depends on dipyrromethane as a cofactor.

It carries out the reaction 4 porphobilinogen + H2O = hydroxymethylbilane + 4 NH4(+). Its pathway is porphyrin-containing compound metabolism; protoporphyrin-IX biosynthesis; coproporphyrinogen-III from 5-aminolevulinate: step 2/4. In terms of biological role, tetrapolymerization of the monopyrrole PBG into the hydroxymethylbilane pre-uroporphyrinogen in several discrete steps. This Clostridium perfringens (strain 13 / Type A) protein is Porphobilinogen deaminase.